The primary structure comprises 303 residues: D-alanine--D-alanine ligase (303 aa).

Residues 104 to 300 (KLLWNAVGLP…FERLVERVLE (197 aa)) enclose the ATP-grasp domain. 132–187 (IAKLGLPLFVKPASEGSSVGVSKVKTAEQLLPAIEEALKYDSIVLVEENLAGAEYS) is an ATP binding site. Residues Asp254, Glu267, and Asn269 each contribute to the Mg(2+) site.

It belongs to the D-alanine--D-alanine ligase family. Requires Mg(2+) as cofactor. The cofactor is Mn(2+).

It is found in the cytoplasm. It catalyses the reaction 2 D-alanine + ATP = D-alanyl-D-alanine + ADP + phosphate + H(+). It participates in cell wall biogenesis; peptidoglycan biosynthesis. Its function is as follows. Cell wall formation. The protein is D-alanine--D-alanine ligase of Glaesserella parasuis serovar 5 (strain SH0165) (Haemophilus parasuis).